The chain runs to 130 residues: Translation initiation factor 5A (130 aa).

K36 bears the Hypusine mark.

The protein belongs to the eIF-5A family.

The protein localises to the cytoplasm. Its function is as follows. Functions by promoting the formation of the first peptide bond. The polypeptide is Translation initiation factor 5A (eif5a) (Methanothermobacter thermautotrophicus (strain ATCC 29096 / DSM 1053 / JCM 10044 / NBRC 100330 / Delta H) (Methanobacterium thermoautotrophicum)).